A 241-amino-acid chain; its full sequence is Biosynthetic peptidoglycan transglycosylase (241 aa).

Residues 19–39 (AILAVLGVWIAGILLFSVMPV) traverse the membrane as a helical segment.

It belongs to the glycosyltransferase 51 family.

It localises to the cell inner membrane. The catalysed reaction is [GlcNAc-(1-&gt;4)-Mur2Ac(oyl-L-Ala-gamma-D-Glu-L-Lys-D-Ala-D-Ala)](n)-di-trans,octa-cis-undecaprenyl diphosphate + beta-D-GlcNAc-(1-&gt;4)-Mur2Ac(oyl-L-Ala-gamma-D-Glu-L-Lys-D-Ala-D-Ala)-di-trans,octa-cis-undecaprenyl diphosphate = [GlcNAc-(1-&gt;4)-Mur2Ac(oyl-L-Ala-gamma-D-Glu-L-Lys-D-Ala-D-Ala)](n+1)-di-trans,octa-cis-undecaprenyl diphosphate + di-trans,octa-cis-undecaprenyl diphosphate + H(+). Its pathway is cell wall biogenesis; peptidoglycan biosynthesis. In terms of biological role, peptidoglycan polymerase that catalyzes glycan chain elongation from lipid-linked precursors. The sequence is that of Biosynthetic peptidoglycan transglycosylase from Cronobacter sakazakii (strain ATCC BAA-894) (Enterobacter sakazakii).